The primary structure comprises 272 residues: 4-hydroxy-tetrahydrodipicolinate reductase (272 aa).

NAD(+) contacts are provided by residues 10 to 15 (GAGGRM), glutamate 36, 100 to 102 (GTT), and 124 to 127 (SGNM). Histidine 157 (proton donor/acceptor) is an active-site residue. Histidine 158 contacts (S)-2,3,4,5-tetrahydrodipicolinate. The Proton donor role is filled by lysine 161. Position 167–168 (167–168 (GT)) interacts with (S)-2,3,4,5-tetrahydrodipicolinate.

The protein belongs to the DapB family.

It is found in the cytoplasm. It catalyses the reaction (S)-2,3,4,5-tetrahydrodipicolinate + NAD(+) + H2O = (2S,4S)-4-hydroxy-2,3,4,5-tetrahydrodipicolinate + NADH + H(+). The enzyme catalyses (S)-2,3,4,5-tetrahydrodipicolinate + NADP(+) + H2O = (2S,4S)-4-hydroxy-2,3,4,5-tetrahydrodipicolinate + NADPH + H(+). Its pathway is amino-acid biosynthesis; L-lysine biosynthesis via DAP pathway; (S)-tetrahydrodipicolinate from L-aspartate: step 4/4. In terms of biological role, catalyzes the conversion of 4-hydroxy-tetrahydrodipicolinate (HTPA) to tetrahydrodipicolinate. This Bradyrhizobium sp. (strain ORS 278) protein is 4-hydroxy-tetrahydrodipicolinate reductase.